A 56-amino-acid polypeptide reads, in one-letter code: Small ribosomal subunit protein uS14 (56 aa).

Zn(2+)-binding residues include Cys-21, Cys-24, Cys-39, and Cys-42.

This sequence belongs to the universal ribosomal protein uS14 family. Zn(2+) serves as cofactor.

This is Small ribosomal subunit protein uS14 (rps29A) from Guillardia theta (Cryptophyte).